A 258-amino-acid chain; its full sequence is UPF0246 protein YPK_3600 (258 aa).

Belongs to the UPF0246 family.

The protein is UPF0246 protein YPK_3600 of Yersinia pseudotuberculosis serotype O:3 (strain YPIII).